Consider the following 240-residue polypeptide: Eukaryotic translation initiation factor 4E-2 (240 aa).

The tract at residues 1–29 (MVVMDSPVSGRMADQNIDPNTTTSPSPIE) is disordered. Residues 17–26 (IDPNTTTSPS) are compositionally biased toward polar residues. EIF4G-binding regions lie at residues 65-68 (HCFQ) and 75-111 (FDNPSSKSNQVIWGSSLRSLYTFATIEEFWSLYNNIH). MRNA contacts are provided by residues 83 to 88 (NQVIWG), Lys115, and 133 to 134 (WE). A disulfide bridge connects residues Cys138 and Cys176. An EIF4G-binding region spans residues 159–168 (NTLLALVGEQ). Residues 183–188 (RTRGDR) and 228–232 (KTLDR) contribute to the mRNA site.

The protein belongs to the eukaryotic initiation factor 4E family. In terms of assembly, EIF4F is a multi-subunit complex, the composition of which varies with external and internal environmental conditions. It is composed of at least EIF4A, EIF4E and EIF4G. EIF4E is also known to interact with other partners. In higher plants two isoforms of EIF4F have been identified, named isoform EIF4F and isoform EIF(iso)4F. Isoform EIF4F has subunits p220 and p26, whereas isoform EIF(iso)4F has subunits p82 and p28. Post-translationally, according to the redox status, the Cys-138-Cys-176 disulfide bridge may have a role in regulating protein function by affecting its ability to bind capped mRNA.

The protein localises to the nucleus. Its subcellular location is the cytoplasm. Its function is as follows. Component of the protein complex eIF4F, which is involved in the recognition of the mRNA cap, ATP-dependent unwinding of 5'-terminal secondary structure and recruitment of mRNA to the ribosome. Recognizes and binds the 7-methylguanosine-containing mRNA cap during an early step in the initiation of protein synthesis and facilitates ribosome binding by inducing the unwinding of the mRNAs secondary structures. This chain is Eukaryotic translation initiation factor 4E-2, found in Arabidopsis thaliana (Mouse-ear cress).